A 370-amino-acid chain; its full sequence is tRNA 2-selenouridine synthase (370 aa).

Positions Phe12–Gln136 constitute a Rhodanese domain. Cys95 serves as the catalytic S-selanylcysteine intermediate.

It belongs to the SelU family. In terms of assembly, monomer.

It carries out the reaction 5-methylaminomethyl-2-thiouridine(34) in tRNA + selenophosphate + (2E)-geranyl diphosphate + H2O + H(+) = 5-methylaminomethyl-2-selenouridine(34) in tRNA + (2E)-thiogeraniol + phosphate + diphosphate. The enzyme catalyses 5-methylaminomethyl-2-thiouridine(34) in tRNA + (2E)-geranyl diphosphate = 5-methylaminomethyl-S-(2E)-geranyl-thiouridine(34) in tRNA + diphosphate. The catalysed reaction is 5-methylaminomethyl-S-(2E)-geranyl-thiouridine(34) in tRNA + selenophosphate + H(+) = 5-methylaminomethyl-2-(Se-phospho)selenouridine(34) in tRNA + (2E)-thiogeraniol. It catalyses the reaction 5-methylaminomethyl-2-(Se-phospho)selenouridine(34) in tRNA + H2O = 5-methylaminomethyl-2-selenouridine(34) in tRNA + phosphate. In terms of biological role, involved in the post-transcriptional modification of the uridine at the wobble position (U34) of tRNA(Lys), tRNA(Glu) and tRNA(Gln). Catalyzes the conversion of 2-thiouridine (S2U-RNA) to 2-selenouridine (Se2U-RNA). Acts in a two-step process involving geranylation of 2-thiouridine (S2U) to S-geranyl-2-thiouridine (geS2U) and subsequent selenation of the latter derivative to 2-selenouridine (Se2U) in the tRNA chain. The chain is tRNA 2-selenouridine synthase from Pseudomonas putida (strain GB-1).